We begin with the raw amino-acid sequence, 254 residues long: Imidazole glycerol phosphate synthase subunit HisF (254 aa).

Residues Asp11 and Asp130 contribute to the active site.

Belongs to the HisA/HisF family. Heterodimer of HisH and HisF.

The protein localises to the cytoplasm. It catalyses the reaction 5-[(5-phospho-1-deoxy-D-ribulos-1-ylimino)methylamino]-1-(5-phospho-beta-D-ribosyl)imidazole-4-carboxamide + L-glutamine = D-erythro-1-(imidazol-4-yl)glycerol 3-phosphate + 5-amino-1-(5-phospho-beta-D-ribosyl)imidazole-4-carboxamide + L-glutamate + H(+). The protein operates within amino-acid biosynthesis; L-histidine biosynthesis; L-histidine from 5-phospho-alpha-D-ribose 1-diphosphate: step 5/9. Functionally, IGPS catalyzes the conversion of PRFAR and glutamine to IGP, AICAR and glutamate. The HisF subunit catalyzes the cyclization activity that produces IGP and AICAR from PRFAR using the ammonia provided by the HisH subunit. The chain is Imidazole glycerol phosphate synthase subunit HisF from Gloeobacter violaceus (strain ATCC 29082 / PCC 7421).